A 325-amino-acid chain; its full sequence is Intelectin (325 aa).

Residues 1–23 form the signal peptide; that stretch reads MKYCVLLIMIHLLLVELPQFPEA. One can recognise a Fibrinogen C-terminal domain in the interval 44–266; that stretch reads IRSSYIGRSC…AAMAICSGVK (223 aa). Cys-53 and Cys-82 are joined by a disulfide. His-98, Glu-99, Asn-101, Gly-104, Gly-109, Asp-110, Asp-145, Glu-274, Glu-286, and Asp-294 together coordinate Ca(2+). 2 disulfide bridges follow: Cys-106/Cys-292 and Cys-262/Cys-277. Residues 274 to 275 and Glu-286 each bind a carbohydrate; that span reads EH.

Expressed at high levels in caudal kidney, liver, and swim bladder. Also expressed in gill, spleen, intestine and head kidney. Not detected in heart.

May be involved in innate immune surveillance. May specifically recognize carbohydrate chains of pathogens and bacterial components in a calcium-dependent manner. In vitro binds N-acetylglucosamine residues. The protein is Intelectin of Oncorhynchus mykiss (Rainbow trout).